Reading from the N-terminus, the 277-residue chain is NLP effector protein Pc109174 (277 aa).

The N-terminal stretch at 1-19 (MNLVPALVLLLALAQTVLG) is a signal peptide. Residues 119-125 (KSRHLWA) carry the Hepta-peptide GHRHDWE motif motif. Asparagine 199 carries N-linked (GlcNAc...) asparagine glycosylation.

The protein belongs to the Necrosis inducing protein (NPP1) family.

The protein localises to the secreted. In terms of biological role, secreted effector that contributes strongly to virulence during infection by P.capsici. Induces cell death in the Solanaceae, including hot pepper. The sequence is that of NLP effector protein Pc109174 from Phytophthora capsici.